We begin with the raw amino-acid sequence, 116 residues long: Large ribosomal subunit protein bL17 (116 aa).

Belongs to the bacterial ribosomal protein bL17 family. As to quaternary structure, part of the 50S ribosomal subunit. Contacts protein L32.

The sequence is that of Large ribosomal subunit protein bL17 from Prochlorococcus marinus (strain SARG / CCMP1375 / SS120).